The sequence spans 227 residues: Urease accessory protein UreF (227 aa).

This sequence belongs to the UreF family. As to quaternary structure, ureD, UreF and UreG form a complex that acts as a GTP-hydrolysis-dependent molecular chaperone, activating the urease apoprotein by helping to assemble the nickel containing metallocenter of UreC. The UreE protein probably delivers the nickel.

Its subcellular location is the cytoplasm. Its function is as follows. Required for maturation of urease via the functional incorporation of the urease nickel metallocenter. This is Urease accessory protein UreF from Actinobacillus pleuropneumoniae serotype 5b (strain L20).